Here is a 196-residue protein sequence, read N- to C-terminus: Putative NADH dehydrogenase/NAD(P)H nitroreductase Smlt0482 (196 aa).

This sequence belongs to the nitroreductase family. HadB/RutE subfamily. FMN is required as a cofactor.

This Stenotrophomonas maltophilia (strain K279a) protein is Putative NADH dehydrogenase/NAD(P)H nitroreductase Smlt0482.